The following is a 520-amino-acid chain: Cytochrome b5 reductase 4 (520 aa).

An N-acetylmethionine modification is found at Met-1. The interval 1 to 27 (MLNVPSQAFPAPGSQQRVASQGRSKVP) is disordered. The segment covering 13–23 (GSQQRVASQGR) has biased composition (polar residues). One can recognise a Cytochrome b5 heme-binding domain in the interval 54–130 (LIEVTEEELK…LKECLVGRMA (77 aa)). Heme-binding residues include His-89 and His-112. A CS domain is found at 164-255 (PSSPSYDWFQ…KETVSWKCLG (92 aa)). The 113-residue stretch at 272-384 (LYYRQCQLIS…SGPEGNFKVS (113 aa)) folds into the FAD-binding FR-type domain. FAD-binding positions include 364–379 (DRLQ…GPEG) and 391–423 (DLFL…KVKL).

Belongs to the flavoprotein pyridine nucleotide cytochrome reductase family. Requires FAD as cofactor. As to expression, isoform 2 is expressed in testis, brain, skeletal muscle and in the male germline.

Its subcellular location is the endoplasmic reticulum. The catalysed reaction is 2 Fe(III)-[cytochrome b5] + NADH = 2 Fe(II)-[cytochrome b5] + NAD(+) + H(+). In terms of biological role, NADH-cytochrome b5 reductase involved in endoplasmic reticulum stress response pathway. Plays a critical role in protecting pancreatic beta-cells against oxidant stress, possibly by protecting the cell from excess buildup of reactive oxygen species (ROS). This Rattus norvegicus (Rat) protein is Cytochrome b5 reductase 4 (Cyb5r4).